We begin with the raw amino-acid sequence, 144 residues long: Small ribosomal subunit protein bS6 (144 aa).

Residues 95–144 (ELEEGPSAMMQSKSRDDRPRRGEGDDRPRRDDREDRPRRDREPRRMEGGE) are disordered. Residues 107–144 (KSRDDRPRRGEGDDRPRRDDREDRPRRDREPRRMEGGE) are compositionally biased toward basic and acidic residues.

The protein belongs to the bacterial ribosomal protein bS6 family.

Its function is as follows. Binds together with bS18 to 16S ribosomal RNA. The chain is Small ribosomal subunit protein bS6 from Paramagnetospirillum magneticum (strain ATCC 700264 / AMB-1) (Magnetospirillum magneticum).